Reading from the N-terminus, the 507-residue chain is MELSPRAAELTNLFESRIRNFYANFQVDEIGRVVSVGDGIAQVYGLNEIQAGEMVLFANGVKGMALNLENENVGIVVFGGDTAIKEGDLVKRTGSIVDVPAGKAMLGRVVDAMGVPIDGKGALSDHEQRRVEVKAPGILERKSVHEPMQTGLKAVDSLVPIGRGQRELLIGDRQTGKTTIAIDTILNQKQINSRATSESETMYCVYVAIGQKRSTVGQLIQTLEEANALEYSILVAATASDPAPLQFLAPYSGCAMGEYFRDNGMHALIIYDDLSKQAVAYRQMSLLLRRPPGREAFPGDVFYLHSRLLERAAKRSDQTGAGSLTALPVIETQAGDVSAYIPTNVISITDGQICLETELFYRGIRPAINVGLSVSRVGSAAQLKAMKQVCGSLKLELAQYREVAAFAQFGSDLDAATQALLNRGARLTEVLKQPQYAPLPIEKQILVIYAAVNGFCDRMPLDRISQYEKAILNSVKPELLQALKGGLTNERKMELDAFLKERALALI.

Residue 171 to 178 (GDRQTGKT) coordinates ATP.

It belongs to the ATPase alpha/beta chains family. F-type ATPases have 2 components, CF(1) - the catalytic core - and CF(0) - the membrane proton channel. CF(1) has five subunits: alpha(3), beta(3), gamma(1), delta(1), epsilon(1). CF(0) has three main subunits: a, b and c.

The protein resides in the mitochondrion. It localises to the mitochondrion inner membrane. Functionally, mitochondrial membrane ATP synthase (F(1)F(0) ATP synthase or Complex V) produces ATP from ADP in the presence of a proton gradient across the membrane which is generated by electron transport complexes of the respiratory chain. F-type ATPases consist of two structural domains, F(1) - containing the extramembraneous catalytic core, and F(0) - containing the membrane proton channel, linked together by a central stalk and a peripheral stalk. During catalysis, ATP synthesis in the catalytic domain of F(1) is coupled via a rotary mechanism of the central stalk subunits to proton translocation. Subunits alpha and beta form the catalytic core in F(1). Rotation of the central stalk against the surrounding alpha(3)beta(3) subunits leads to hydrolysis of ATP in three separate catalytic sites on the beta subunits. Subunit alpha does not bear the catalytic high-affinity ATP-binding sites. This is ATP synthase subunit alpha, mitochondrial (ATPA) from Arabidopsis thaliana (Mouse-ear cress).